The following is a 499-amino-acid chain: Na(+)/H(+) antiporter NhaB (499 aa).

11 helical membrane passes run 33–53, 66–86, 89–109, 128–148, 237–257, 305–325, 326–346, 349–369, 393–413, 449–469, and 477–497; these read PVIF…EFIF, PGGL…HTVY, VSGN…IYFM, AILS…LDAL, FIEF…AGLI, AIVA…VGLI, GLTV…HQIG, FEEA…VGVI, MFFI…VATV, ATPN…APLI, and VWMA…MIVI.

This sequence belongs to the NhaB Na(+)/H(+) (TC 2.A.34) antiporter family.

The protein resides in the cell inner membrane. It catalyses the reaction 2 Na(+)(in) + 3 H(+)(out) = 2 Na(+)(out) + 3 H(+)(in). Na(+)/H(+) antiporter that extrudes sodium in exchange for external protons. This Hahella chejuensis (strain KCTC 2396) protein is Na(+)/H(+) antiporter NhaB.